A 337-amino-acid chain; its full sequence is Methionine import ATP-binding protein MetN (337 aa).

An ABC transporter domain is found at 4 to 240; sequence IKNLEITYPG…PWHPITKEFV (237 aa). ATP is bound at residue 37 to 44; it reads GLSGAGKS.

The protein belongs to the ABC transporter superfamily. Methionine importer (TC 3.A.1.24) family. The complex is composed of two ATP-binding proteins (MetN), two transmembrane proteins (MetI) and a solute-binding protein (MetQ).

The protein localises to the cell membrane. It catalyses the reaction L-methionine(out) + ATP + H2O = L-methionine(in) + ADP + phosphate + H(+). The catalysed reaction is D-methionine(out) + ATP + H2O = D-methionine(in) + ADP + phosphate + H(+). In terms of biological role, part of the ABC transporter complex MetNIQ involved in methionine import. Responsible for energy coupling to the transport system. This is Methionine import ATP-binding protein MetN from Carboxydothermus hydrogenoformans (strain ATCC BAA-161 / DSM 6008 / Z-2901).